The following is a 364-amino-acid chain: Fructose-bisphosphate aldolase, non-muscle type (364 aa).

2 residues coordinate substrate: arginine 56 and lysine 147. The Schiff-base intermediate with dihydroxyacetone-P role is filled by lysine 230.

This sequence belongs to the class I fructose-bisphosphate aldolase family. In terms of assembly, homotetramer. As to expression, expressed mainly in the liver and also in brain and other tissues, except for the heart muscle.

The catalysed reaction is beta-D-fructose 1,6-bisphosphate = D-glyceraldehyde 3-phosphate + dihydroxyacetone phosphate. Its pathway is carbohydrate degradation; glycolysis; D-glyceraldehyde 3-phosphate and glycerone phosphate from D-glucose: step 4/4. This chain is Fructose-bisphosphate aldolase, non-muscle type, found in Lethenteron camtschaticum (Japanese lamprey).